A 542-amino-acid polypeptide reads, in one-letter code: Pre-mRNA-splicing factor 38B (542 aa).

The span at 1–12 (MANNSPALTGNS) shows a compositional bias: polar residues. The disordered stretch occupies residues 1 to 41 (MANNSPALTGNSQPQHQAAAAVTQQQQQCGGGGGATKPAVS). Residue Ala-2 is modified to N-acetylalanine. Ser-5 bears the Phosphoserine mark. Positions 13 to 28 (QPQHQAAAAVTQQQQQ) are enriched in low complexity. The residue at position 228 (Lys-228) is an N6-acetyllysine. The segment at 233–542 (QIKTRPRKIK…KEHKSKDETV (310 aa)) is disordered. Residues 244–256 (DGKEGIEEIDRHV) are compositionally biased toward basic and acidic residues. Over residues 257 to 285 (ERRRSRSPRRSLSPRRSPRRSRSRSHHRE) the composition is skewed to basic residues. 4 positions are modified to phosphoserine: Ser-289, Ser-291, Ser-319, and Ser-321. Residues 292-328 (FDRELEREKERQRLEREAKEREKERRRSRSIDRGLDR) are compositionally biased toward basic and acidic residues. A coiled-coil region spans residues 293–322 (DRELEREKERQRLEREAKEREKERRRSRSI). Residues 329–345 (RRSRSRERHRSRSRSRD) are compositionally biased toward basic residues. The span at 346 to 419 (RKGDRRDRDR…DRRHRDDKKE (74 aa)) shows a compositional bias: basic and acidic residues. The span at 420–447 (SKKKHSRSRSRERKHRSRSRNAGKRSRS) shows a compositional bias: basic residues. Ser-445 carries the phosphoserine modification. Residues 448-465 (RSKDKSSRHKNESKEKAN) show a composition bias toward basic and acidic residues. A phosphoserine mark is found at Ser-470, Ser-472, and Ser-478. Composition is skewed to basic and acidic residues over residues 478–491 (SVEK…PSRE) and 498–520 (RSQD…RQDH). 3 positions are modified to phosphoserine: Ser-523, Ser-525, and Ser-530. Residues 530–542 (SQEKEHKSKDETV) are compositionally biased toward basic and acidic residues.

The protein belongs to the PRP38 family.

The protein localises to the nucleus. May be required for pre-mRNA splicing. The chain is Pre-mRNA-splicing factor 38B (Prpf38b) from Mus musculus (Mouse).